The sequence spans 216 residues: Adenylate kinase (216 aa).

10-15 (GAGKGT) provides a ligand contact to ATP. The segment at 30–59 (STGDIFRANIKEKTPLGIEAKRYIDNGQLV) is NMP. AMP-binding positions include Thr-31, Arg-36, 57–59 (QLV), 85–88 (GFPR), and Gln-92. The interval 126-163 (GRRVCTSCGASYHIRFNPPKIEGKCDICDNELIQRKDD) is LID. Residue Arg-127 participates in ATP binding. Positions 130 and 133 each coordinate Zn(2+). 136–137 (SY) serves as a coordination point for ATP. Cys-150 and Cys-153 together coordinate Zn(2+). 2 residues coordinate AMP: Arg-160 and Arg-171. An ATP-binding site is contributed by Glu-199.

Belongs to the adenylate kinase family. Monomer.

It is found in the cytoplasm. It carries out the reaction AMP + ATP = 2 ADP. It participates in purine metabolism; AMP biosynthesis via salvage pathway; AMP from ADP: step 1/1. Its function is as follows. Catalyzes the reversible transfer of the terminal phosphate group between ATP and AMP. Plays an important role in cellular energy homeostasis and in adenine nucleotide metabolism. This is Adenylate kinase from Clostridium botulinum (strain ATCC 19397 / Type A).